Here is a 676-residue protein sequence, read N- to C-terminus: Pescadillo homolog (676 aa).

Positions 298-327 (IAAMADDEDEQEVEMAEADAEDDDEEENTE) form a coiled coil. Disordered regions lie at residues 298–338 (IAAM…TAPD), 413–439 (PLANGASAAGAEDAATPQVQWPHSTKP), 478–502 (VKPKKGEYDPNLPLAAQQPDGEAEA), and 515–676 (EVDD…AERA). Acidic residues predominate over residues 302-327 (ADDEDEQEVEMAEADAEDDDEEENTE). A BRCT domain is found at 351 to 466 (EIASLFAPFT…KLLRPDLYAP (116 aa)). Over residues 415-427 (ANGASAAGAEDAA) the composition is skewed to low complexity. 3 stretches are compositionally biased toward acidic residues: residues 515 to 524 (EVDDDEDMDA), 539 to 557 (DVADSDDDDEDDSESDAEG), and 565 to 577 (FDDESEAESDISE). Residues 568 to 676 (ESEAESDISE…EKAKAAAERA (109 aa)) are a coiled coil. Composition is skewed to basic and acidic residues over residues 579–608 (EAARLQHQRELEAEATGKKLDVKAPTKKEQ), 620–631 (KRAEEEERDRQK), 643–659 (KRIEYGENKRDTESENL), and 666–676 (LEKAKAAAERA).

The protein belongs to the pescadillo family. As to quaternary structure, component of the NOP7 complex, composed of ERB1, NOP7 and YTM1. The complex is held together by ERB1, which interacts with NOP7 via its N-terminal domain and with YTM1 via a high-affinity interaction between the seven-bladed beta-propeller domains of the 2 proteins. The NOP7 complex associates with the 66S pre-ribosome.

It is found in the nucleus. The protein resides in the nucleolus. The protein localises to the nucleoplasm. Functionally, component of the NOP7 complex, which is required for maturation of the 25S and 5.8S ribosomal RNAs and formation of the 60S ribosome. The protein is Pescadillo homolog of Phaeosphaeria nodorum (strain SN15 / ATCC MYA-4574 / FGSC 10173) (Glume blotch fungus).